We begin with the raw amino-acid sequence, 571 residues long: Proline--tRNA ligase (571 aa).

This sequence belongs to the class-II aminoacyl-tRNA synthetase family. ProS type 1 subfamily. As to quaternary structure, homodimer.

Its subcellular location is the cytoplasm. The catalysed reaction is tRNA(Pro) + L-proline + ATP = L-prolyl-tRNA(Pro) + AMP + diphosphate. In terms of biological role, catalyzes the attachment of proline to tRNA(Pro) in a two-step reaction: proline is first activated by ATP to form Pro-AMP and then transferred to the acceptor end of tRNA(Pro). As ProRS can inadvertently accommodate and process non-cognate amino acids such as alanine and cysteine, to avoid such errors it has two additional distinct editing activities against alanine. One activity is designated as 'pretransfer' editing and involves the tRNA(Pro)-independent hydrolysis of activated Ala-AMP. The other activity is designated 'posttransfer' editing and involves deacylation of mischarged Ala-tRNA(Pro). The misacylated Cys-tRNA(Pro) is not edited by ProRS. This Azotobacter vinelandii (strain DJ / ATCC BAA-1303) protein is Proline--tRNA ligase.